A 121-amino-acid polypeptide reads, in one-letter code: Large ribosomal subunit protein uL22 (121 aa).

It belongs to the universal ribosomal protein uL22 family. As to quaternary structure, part of the 50S ribosomal subunit.

Functionally, this protein binds specifically to 23S rRNA; its binding is stimulated by other ribosomal proteins, e.g. L4, L17, and L20. It is important during the early stages of 50S assembly. It makes multiple contacts with different domains of the 23S rRNA in the assembled 50S subunit and ribosome. In terms of biological role, the globular domain of the protein is located near the polypeptide exit tunnel on the outside of the subunit, while an extended beta-hairpin is found that lines the wall of the exit tunnel in the center of the 70S ribosome. The polypeptide is Large ribosomal subunit protein uL22 (Micrococcus luteus (strain ATCC 4698 / DSM 20030 / JCM 1464 / CCM 169 / CCUG 5858 / IAM 1056 / NBRC 3333 / NCIMB 9278 / NCTC 2665 / VKM Ac-2230) (Micrococcus lysodeikticus)).